The primary structure comprises 597 residues: MVIEQQITGAIIAGIKELYGADVTASQVQLQKTKKEFKGHLTLVVFPFLRMSKKSPEQTAQEIGEYLLRNEPAVAEFNVIKGFLNLTVACSCWIDLLNSINEQPAYGIIPVTEQSPLVMIEYSSPNTNKPLHLGHVRNNLLGYSLSKIIKANGNQIVKTNIVNDRGIHICKSMLAWQKWGNGATPESTGKKGDHLIGDFYVLFSNKLKEETHALEAKGLTKEEAEAQSTLMAEAREMLRKWEAGDKEVRALWEMMNNWVYAGFNETYKMMGVDFDKIYYESQTYLEGKGKVMEGLEKGIFYRREDGSVWADLTKDGLDEKLLLRADGTSVYMTQDIGTAKLRFDDYPINKMIYVVGNEQNYHFQVLSILLDKLGFEFGKGLVHFSYGMVELPEGKMKSREGTVVDADDLMAEMISTAREISQELGKLDEMTPEEAENIARIVGLGSLKYFILKVDPRKNMTFNPKESIDFNGNTGPFIQYTYARIRSVLRKAAEQGIVLPEQLPLTFAISEKEENLIQMIADYAEIVKEAGKLYSPACVANYIYDLVKEYNQFYHDFSILREENPELKNFRLVLSANVAKIVKSGMDLLGIEVPERM.

A 'HIGH' region motif is present at residues 125 to 135 (PNTNKPLHLGH).

Belongs to the class-I aminoacyl-tRNA synthetase family. Monomer.

Its subcellular location is the cytoplasm. The catalysed reaction is tRNA(Arg) + L-arginine + ATP = L-arginyl-tRNA(Arg) + AMP + diphosphate. This is Arginine--tRNA ligase from Parabacteroides distasonis (strain ATCC 8503 / DSM 20701 / CIP 104284 / JCM 5825 / NCTC 11152).